The primary structure comprises 179 residues: Large ribosomal subunit protein uL5 (179 aa).

It belongs to the universal ribosomal protein uL5 family. In terms of assembly, part of the 50S ribosomal subunit; part of the 5S rRNA/L5/L18/L25 subcomplex. Contacts the 5S rRNA and the P site tRNA. Forms a bridge to the 30S subunit in the 70S ribosome.

Functionally, this is one of the proteins that bind and probably mediate the attachment of the 5S RNA into the large ribosomal subunit, where it forms part of the central protuberance. In the 70S ribosome it contacts protein S13 of the 30S subunit (bridge B1b), connecting the 2 subunits; this bridge is implicated in subunit movement. Contacts the P site tRNA; the 5S rRNA and some of its associated proteins might help stabilize positioning of ribosome-bound tRNAs. The polypeptide is Large ribosomal subunit protein uL5 (Aeromonas salmonicida (strain A449)).